The following is a 319-amino-acid chain: MSSYRLGYCMKEERHNLVLCLWSQSPGILNSKCLWPFTNIHLLVGALPREGAGGAWGGGRSEQLPTCSTTHHDFTWDKKVVNPLFEKRPKNFGIGQDIQPKRDLTRFVKWPRYIRLQRQRAILYKRLKVPPAINQFTQVLDRQTATQLLKLAHKYRPETKQEKKQRLLARAEKKAAGKGDVPTKRPPVLRAGVNTVTTLVENKKAQLVVIAHDVDPIELVVFLPALCRKMGVPYCILKGKARLCRLVHRKTCTTVAFTQVNSEDKGALAKLVEAIRTNYNDRYDEIRRHWGGNVLGPKSVARIAKLEKAKAKELATKLG.

Residue lysine 87 is modified to N6-acetyllysine. A Glycyl lysine isopeptide (Lys-Gly) (interchain with G-Cter in SUMO2) cross-link involves residue lysine 101. Position 150 is an N6-acetyllysine; alternate (lysine 150). Lysine 150 is covalently cross-linked (Glycyl lysine isopeptide (Lys-Gly) (interchain with G-Cter in SUMO2); alternate). Lysine 178 participates in a covalent cross-link: Glycyl lysine isopeptide (Lys-Gly) (interchain with G-Cter in SUMO2). Lysine 270 carries the post-translational modification N6-acetyllysine. Lysine 298 participates in a covalent cross-link: Glycyl lysine isopeptide (Lys-Gly) (interchain with G-Cter in SUMO2).

The protein belongs to the eukaryotic ribosomal protein eL8 family. Component of the large ribosomal subunit. Interacts with CRY1. Interacts with DICER1, AGO2, TARBP2, MOV10 and EIF6; they form a large RNA-induced silencing complex (RISC).

The protein localises to the cytoplasm. Component of the large ribosomal subunit. The ribosome is a large ribonucleoprotein complex responsible for the synthesis of proteins in the cell. The polypeptide is Large ribosomal subunit protein eL8 (RPL7A) (Oryctolagus cuniculus (Rabbit)).